The following is a 365-amino-acid chain: Fructose-1,6-bisphosphatase class 1 2 (365 aa).

Positions 100, 122, 124, and 125 each coordinate Mg(2+). Residues 125-128 and Asn221 contribute to the substrate site; that span reads DGSS. Glu293 contacts Mg(2+).

It belongs to the FBPase class 1 family. Homotetramer. Mg(2+) is required as a cofactor.

The protein localises to the cytoplasm. The catalysed reaction is beta-D-fructose 1,6-bisphosphate + H2O = beta-D-fructose 6-phosphate + phosphate. It participates in carbohydrate biosynthesis; gluconeogenesis. This is Fructose-1,6-bisphosphatase class 1 2 from Leptothrix cholodnii (strain ATCC 51168 / LMG 8142 / SP-6) (Leptothrix discophora (strain SP-6)).